The sequence spans 365 residues: G-protein coupled receptor 4 (365 aa).

The Extracellular segment spans residues M1–G10. N-linked (GlcNAc...) asparagine glycosylation is present at N3. The chain crosses the membrane as a helical span at residues C11–Q47. Disulfide bonds link C11/C260 and C92/C170. The Cytoplasmic portion of the chain corresponds to V48–R51. A helical transmembrane segment spans residues N52 to H82. Residues D83–H87 are Extracellular-facing. The chain crosses the membrane as a helical span at residues G88–H123. The Cytoplasmic portion of the chain corresponds to P124–R131. Residues R132–D158 traverse the membrane as a helical segment. The Extracellular portion of the chain corresponds to E159–F174. Positions E159–F174 are extracellular loop 2 (ECL2). An N-linked (GlcNAc...) asparagine glycan is attached at N166. The chain crosses the membrane as a helical span at residues P175–S212. Residues S213–T216 lie on the Cytoplasmic side of the membrane. The helical transmembrane segment at E217–V252 threads the bilayer. Residues Y253–F262 are Extracellular-facing. Residues E263 to V291 form a helical membrane-spanning segment. The Cytoplasmic portion of the chain corresponds to N292–Q365.

This sequence belongs to the G-protein coupled receptor 1 family.

The protein resides in the cell membrane. Its activity is regulated as follows. Activated by a network of residues that connects an extracellular-facing cavity to Glu-147, a conserved charged residue buried in the transmembrane core of the receptor. Protonation likely drives conformational changes in extracellular loop 2 (ECL2), which stabilizes movement of transmembrane 3 (TM3) and a series of rearrangements that connect the extracellular-facing cavity to Glu-147, a residue only conserved in proton-sensing G-protein coupled receptors. Functionally, proton-sensing G-protein coupled receptor activated by extracellular pH, which is required to monitor pH changes and generate adaptive reactions. Activated by an optimal pH of 6.8-7.2. Ligand binding causes a conformation change that triggers signaling via guanine nucleotide-binding proteins (G proteins) and modulates the activity of downstream effectors, such as adenylate cyclase. GPR4 is mainly coupled to G(s) G proteins and mediates activation of adenylate cyclase activity. May also couple with G(q) and G(12)/G(13) G proteins. Acts as a key regulator of respiratory sensitivity to CO2/H(+) in brain retrotrapezoid nucleus neurons: acts by mediating detection of protons generated by the formation of carbonic acid in the blood, an important mechanism to impulse to breathe. Also acts as a regulator of acid secretion in the kidney collecting duct by maintaining acid-base homeostasis in the kidney. Acidosis-induced GPR4 activation increases paracellular gap formation and permeability of vascular endothelial cells, possibly through the G(12)/G(13)/Rho GTPase signaling pathway. In Rattus norvegicus (Rat), this protein is G-protein coupled receptor 4.